Reading from the N-terminus, the 462-residue chain is Neuronal acetylcholine receptor subunit non-alpha-2 (462 aa).

Residues 1-30 (MTLAVIGLFTLFTSIIAITPAREFVSLAER) form the signal peptide. The Extracellular portion of the chain corresponds to 31 to 234 (EDALLRELFQ…ITYSFILKRL (204 aa)). Asn-53 and Asn-168 each carry an N-linked (GlcNAc...) asparagine glycan. A disulfide bond links Cys-155 and Cys-169. 3 consecutive transmembrane segments (helical) span residues 235–259 (PLFYTLFLIIPCLGLSFLTVLVFYL), 267–284 (VSLSTSVLVSLTVFLLVI), and 301–322 (YLLFIMIFVTLSIIVTIFVINV). Topologically, residues 323 to 428 (HHRSSATYHP…WKFVAQVLDR (106 aa)) are cytoplasmic. The segment covering 362-372 (ELEPHSPDLKP) has biased composition (basic and acidic residues). The tract at residues 362-384 (ELEPHSPDLKPRNKKGPPGPEGE) is disordered. Residues 429–446 (IFLWTFLTVSVLGTILIF) traverse the membrane as a helical segment.

Belongs to the ligand-gated ion channel (TC 1.A.9) family. Acetylcholine receptor (TC 1.A.9.1) subfamily. In terms of assembly, neuronal AChR seems to be composed of two different type of subunits: alpha and beta.

The protein resides in the postsynaptic cell membrane. It localises to the cell membrane. Functionally, after binding acetylcholine, the AChR responds by an extensive change in conformation that affects all subunits and leads to opening of an ion-conducting channel across the plasma membrane. In Carassius auratus (Goldfish), this protein is Neuronal acetylcholine receptor subunit non-alpha-2.